Consider the following 304-residue polypeptide: N-acetylmuramic acid 6-phosphate etherase 1 (304 aa).

The segment covering 1–10 (MENSHLGSLT) has biased composition (polar residues). A disordered region spans residues 1–20 (MENSHLGSLTTERRNERSKR). Positions 58-221 (AVGSLKKGGR…STAAMIKMGK (164 aa)) constitute an SIS domain. Catalysis depends on Glu-86, which acts as the Proton donor. Glu-117 is an active-site residue.

This sequence belongs to the GCKR-like family. MurNAc-6-P etherase subfamily. As to quaternary structure, homodimer.

It carries out the reaction N-acetyl-D-muramate 6-phosphate + H2O = N-acetyl-D-glucosamine 6-phosphate + (R)-lactate. It participates in amino-sugar metabolism; N-acetylmuramate degradation. Its function is as follows. Specifically catalyzes the cleavage of the D-lactyl ether substituent of MurNAc 6-phosphate, producing GlcNAc 6-phosphate and D-lactate. The chain is N-acetylmuramic acid 6-phosphate etherase 1 from Bacillus licheniformis (strain ATCC 14580 / DSM 13 / JCM 2505 / CCUG 7422 / NBRC 12200 / NCIMB 9375 / NCTC 10341 / NRRL NRS-1264 / Gibson 46).